The chain runs to 154 residues: Probable transport accessory protein MmpS4 (154 aa).

2 helical membrane passes run 19-39 (IWIPLVILVVLVVGGFVVYRV) and 97-117 (QLPWSLLMTTTLAAVMGNLVA).

Belongs to the MmpS family.

The protein resides in the cell membrane. This Mycobacterium leprae (strain TN) protein is Probable transport accessory protein MmpS4.